The sequence spans 72 residues: Disintegrin sasaimin (72 aa).

The region spanning 1 to 72 is the Disintegrin domain; sequence EAGEECDCGA…SAGCPRNPFH (72 aa). 6 disulfides stabilise this stretch: cysteine 6–cysteine 21, cysteine 8–cysteine 16, cysteine 15–cysteine 38, cysteine 29–cysteine 35, cysteine 34–cysteine 59, and cysteine 47–cysteine 66. The Cell attachment site motif lies at 51–53; the sequence is RGD.

It belongs to the venom metalloproteinase (M12B) family. P-II subfamily. P-IIa sub-subfamily. Monomer. As to expression, expressed by the venom gland.

The protein resides in the secreted. Inhibits ADP- (IC(50)=66 nM) and collagen-induced (IC(50)=100 nM) aggregation of human platelets. In vitro, inhibits adhesion of endothelial cells to vitronectin, type-I collagen and, to a lower degree, fibronectin and laminin. The protein is Disintegrin sasaimin of Cerrophidion sasai (Costa Rica montane pitviper).